A 261-amino-acid polypeptide reads, in one-letter code: 5'-nucleotidase SurE (261 aa).

A divalent metal cation-binding residues include D8, D9, S39, and N91.

The protein belongs to the SurE nucleotidase family. A divalent metal cation is required as a cofactor.

The protein resides in the cytoplasm. It catalyses the reaction a ribonucleoside 5'-phosphate + H2O = a ribonucleoside + phosphate. In terms of biological role, nucleotidase that shows phosphatase activity on nucleoside 5'-monophosphates. The chain is 5'-nucleotidase SurE from Polaromonas naphthalenivorans (strain CJ2).